The following is a 401-amino-acid chain: Beta-ketoadipyl-CoA thiolase (401 aa).

Cys-91 serves as the catalytic Acyl-thioester intermediate. Residues His-357 and Cys-387 each act as proton acceptor in the active site.

This sequence belongs to the thiolase-like superfamily. Thiolase family.

The catalysed reaction is succinyl-CoA + acetyl-CoA = 3-oxoadipyl-CoA + CoA. Its pathway is aromatic compound metabolism; beta-ketoadipate pathway; acetyl-CoA and succinyl-CoA from 3-oxoadipate: step 2/2. In terms of biological role, catalyzes thiolytic cleavage of beta-ketoadipyl-CoA to succinyl-CoA and acetyl-CoA. In Pseudomonas aeruginosa (strain ATCC 15692 / DSM 22644 / CIP 104116 / JCM 14847 / LMG 12228 / 1C / PRS 101 / PAO1), this protein is Beta-ketoadipyl-CoA thiolase (pcaF).